The chain runs to 134 residues: Small ribosomal subunit protein bS6 (134 aa).

This sequence belongs to the bacterial ribosomal protein bS6 family.

Binds together with bS18 to 16S ribosomal RNA. In Chlorobium phaeobacteroides (strain BS1), this protein is Small ribosomal subunit protein bS6.